A 254-amino-acid polypeptide reads, in one-letter code: Phosphoglycerate mutase 1 (254 aa).

Residues 10–17 and 23–24 contribute to the substrate site; these read RHGESTWN and SG. His-11 acts as the Tele-phosphohistidine intermediate in catalysis. Phosphoserine occurs at positions 14 and 23. At Tyr-26 the chain carries Phosphotyrosine. Phosphoserine is present on Ser-31. Substrate-binding positions include Arg-62, 89 to 92, and Lys-100; that span reads ERHY. Glu-89 (proton donor/acceptor) is an active-site residue. Residue Lys-106 is modified to N6-acetyllysine. 116–117 contacts substrate; it reads RR. The residue at position 118 (Ser-118) is a Phosphoserine. Position 187-188 (187-188) interacts with substrate; the sequence is GN. The residue at position 251 (Lys-251) is an N6-acetyllysine; alternate. At Lys-251 the chain carries N6-succinyllysine; alternate. N6-acetyllysine occurs at positions 253 and 254.

Belongs to the phosphoglycerate mutase family. BPG-dependent PGAM subfamily. Homodimer. Acetylated at Lys-253, Lys-253 and Lys-254 under high glucose condition. Acetylation increases catalytic activity. Under glucose restriction SIRT1 levels dramatically increase and it deacetylates the enzyme.

It carries out the reaction (2R)-2-phosphoglycerate = (2R)-3-phosphoglycerate. The enzyme catalyses (2R)-3-phospho-glyceroyl phosphate = (2R)-2,3-bisphosphoglycerate + H(+). In terms of biological role, catalyzes the interconversion of 2-phosphoglycerate and 3-phosphoglyceratea crucial step in glycolysis, by using 2,3-bisphosphoglycerate. Also catalyzes the interconversion of (2R)-2,3-bisphosphoglycerate and (2R)-3-phospho-glyceroyl phosphate. The chain is Phosphoglycerate mutase 1 from Bos taurus (Bovine).